A 125-amino-acid chain; its full sequence is Nascent polypeptide-associated complex protein (125 aa).

The 68-residue stretch at proline 9–lysine 76 folds into the NAC-A/B domain.

This sequence belongs to the NAC-alpha family. As to quaternary structure, homodimer. Interacts with the ribosome. Binds ribosomal RNA.

Contacts the emerging nascent chain on the ribosome. This Methanococcus vannielii (strain ATCC 35089 / DSM 1224 / JCM 13029 / OCM 148 / SB) protein is Nascent polypeptide-associated complex protein.